We begin with the raw amino-acid sequence, 351 residues long: MNVKEHVISLPRRVFVGHDIIYDISIYFSQLGITSPFLIVTGTKYTKKIADKVIENLPKDAKYEVIEIDTATLDDVYKVEEVVKKVNPNILLGIGGGKVIDVTKYAAFRNNLEFVSIPTSPSHDGITSPFASIKGLQKPVSVKAKEPLAIIADIEILSLSPRRLINAGIGDTIGKIIAVRDWRLAAKLRGEYYGDYTASLALMSAKHAFQCTKIINKDIKYGVRMLIEALISSGVAMGMAGSTRPASGSEHLFAHAVELLHPEGVLHGELVGLGTIIMAYLHGINWKIIRDRLKKIGFPVKAKDLGLSDEEVIKALTIAHTIRPERYTILGDRGLTWSSAEKIARVTKIID.

Residues 97–101 (GKVID) and 119–122 (TSPS) each bind NAD(+). Aspartate 124 serves as a coordination point for substrate. Serine 128 contacts NAD(+). Aspartate 171 lines the substrate pocket. Zn(2+)-binding residues include aspartate 171 and histidine 251. Histidine 255 serves as a coordination point for substrate. Residue histidine 267 coordinates Zn(2+).

It belongs to the glycerol-1-phosphate dehydrogenase family. In terms of assembly, homodimer. Zn(2+) serves as cofactor.

The protein resides in the cytoplasm. It carries out the reaction sn-glycerol 1-phosphate + NAD(+) = dihydroxyacetone phosphate + NADH + H(+). The enzyme catalyses sn-glycerol 1-phosphate + NADP(+) = dihydroxyacetone phosphate + NADPH + H(+). It functions in the pathway membrane lipid metabolism; glycerophospholipid metabolism. Catalyzes the NAD(P)H-dependent reduction of dihydroxyacetonephosphate (DHAP or glycerone phosphate) to glycerol 1-phosphate (G1P). The G1P thus generated is used as the glycerophosphate backbone of phospholipids in the cellular membranes of Archaea. The protein is Glycerol-1-phosphate dehydrogenase [NAD(P)+] of Saccharolobus islandicus (strain M.16.27) (Sulfolobus islandicus).